We begin with the raw amino-acid sequence, 581 residues long: Chaperonin GroEL 1 (581 aa).

ATP is bound by residues 29–32, 86–90, Gly413, and Asp492; these read TIGP and DGTTT.

It belongs to the chaperonin (HSP60) family. As to quaternary structure, forms a cylinder of 14 subunits composed of two heptameric rings stacked back-to-back. Interacts with the co-chaperonin GroES.

It localises to the cytoplasm. The catalysed reaction is ATP + H2O + a folded polypeptide = ADP + phosphate + an unfolded polypeptide.. Its function is as follows. Together with its co-chaperonin GroES, plays an essential role in assisting protein folding. The GroEL-GroES system forms a nano-cage that allows encapsulation of the non-native substrate proteins and provides a physical environment optimized to promote and accelerate protein folding. The sequence is that of Chaperonin GroEL 1 from Prochlorococcus marinus subsp. pastoris (strain CCMP1986 / NIES-2087 / MED4).